A 200-amino-acid polypeptide reads, in one-letter code: GTP-dependent dephospho-CoA kinase (200 aa).

GTP is bound by residues aspartate 56, valine 57, valine 58, aspartate 75, and glutamate 132.

The protein belongs to the GTP-dependent DPCK family.

It catalyses the reaction 3'-dephospho-CoA + GTP = GDP + CoA + H(+). It participates in cofactor biosynthesis; coenzyme A biosynthesis. Catalyzes the GTP-dependent phosphorylation of the 3'-hydroxyl group of dephosphocoenzyme A to form coenzyme A (CoA). This chain is GTP-dependent dephospho-CoA kinase, found in Caldivirga maquilingensis (strain ATCC 700844 / DSM 13496 / JCM 10307 / IC-167).